The primary structure comprises 144 residues: Granulocyte-macrophage colony-stimulating factor (144 aa).

Residues 1 to 17 form the signal peptide; it reads MWLQNLLLLGTVVCSFS. Ser24 is a glycosylation site (O-linked (GalNAc...) serine). Residue Thr27 is glycosylated (O-linked (GalNAc...) threonine). 2 N-linked (GlcNAc...) asparagine glycosylation sites follow: Asn44 and Asn54. Cystine bridges form between Cys71/Cys113 and Cys105/Cys138.

Belongs to the GM-CSF family. Monomer. The signaling GM-CSF receptor complex is a dodecamer of two head-to-head hexamers of two alpha, two beta, and two ligand subunits.

The protein resides in the secreted. Its function is as follows. Cytokine that stimulates the growth and differentiation of hematopoietic precursor cells from various lineages, including granulocytes, macrophages, eosinophils and erythrocytes. The sequence is that of Granulocyte-macrophage colony-stimulating factor (CSF2) from Cervus elaphus (Red deer).